Consider the following 368-residue polypeptide: Probable dual-specificity RNA methyltransferase RlmN (368 aa).

Catalysis depends on glutamate 108, which acts as the Proton acceptor. Residues 114–345 (HAYGNSVCVS…VTVRRGLGAD (232 aa)) enclose the Radical SAM core domain. Cysteine 121 and cysteine 350 are joined by a disulfide. [4Fe-4S] cluster is bound by residues cysteine 128, cysteine 132, and cysteine 135. S-adenosyl-L-methionine is bound by residues 175–176 (GE), serine 207, 230–232 (SLH), and asparagine 307. Cysteine 350 serves as the catalytic S-methylcysteine intermediate.

It belongs to the radical SAM superfamily. RlmN family. It depends on [4Fe-4S] cluster as a cofactor.

It localises to the cytoplasm. It catalyses the reaction adenosine(2503) in 23S rRNA + 2 reduced [2Fe-2S]-[ferredoxin] + 2 S-adenosyl-L-methionine = 2-methyladenosine(2503) in 23S rRNA + 5'-deoxyadenosine + L-methionine + 2 oxidized [2Fe-2S]-[ferredoxin] + S-adenosyl-L-homocysteine. The enzyme catalyses adenosine(37) in tRNA + 2 reduced [2Fe-2S]-[ferredoxin] + 2 S-adenosyl-L-methionine = 2-methyladenosine(37) in tRNA + 5'-deoxyadenosine + L-methionine + 2 oxidized [2Fe-2S]-[ferredoxin] + S-adenosyl-L-homocysteine. Specifically methylates position 2 of adenine 2503 in 23S rRNA and position 2 of adenine 37 in tRNAs. This is Probable dual-specificity RNA methyltransferase RlmN from Pelotomaculum thermopropionicum (strain DSM 13744 / JCM 10971 / SI).